The following is a 340-amino-acid chain: Terpene synthase 29 (340 aa).

Residues Asp132, Glu197, Asn257, Ser261, and Glu265 each contribute to the Mg(2+) site. The DDXXXXD motif motif lies at 132-138 (DEPDILE). Residues 257-265 (NDILSFYKE) carry the NSE/DTE motif motif.

The protein belongs to the trichodiene synthase family. Mg(2+) serves as cofactor.

Functionally, terpene cyclase that catalyzes the cyclization of farnesyl diphosphate (FPP) to a single major terpene scaffold whose chemical structure is still unknown. This is Terpene synthase 29 from Postia placenta (strain ATCC 44394 / Madison 698-R) (Brown rot fungus).